Reading from the N-terminus, the 371-residue chain is MLKEFEIEPLLKDKVPHQTKAVVAMSGGVDSSVAAVLLHRLGYQVIGVTLQLYGADGNSNTRKKGVCCAGQDIYDAKRVAEGTGFPHYILNYEEIFKKEVIESFAQTYIQGKTPIPCIKCNQTVKFRDLLQVTRNLGADVLITGHYVRRLEKNGEVKLCRGIDKSKDQSYFLFATTKEQLKLLRFPLGGFYKCNVRKLARYFSLPISEKPDSQDICFVSENYSKTIAKLAPQSIQKGKIVDVNGKVLGEHNGIVNFTVGQRKGLGIAYSEPLYVVRINTKNNEIVVGPVNALMQRKILVKELNWLEQPKKGMEVTVKLRSLHSGSLAKIYPAKEQNKAYVILNDDYFSISPGQACVAYKDEQVIGGGWICS.

ATP is bound by residues 24–31 (AMSGGVDS) and Leu50. Cys120 serves as the catalytic Nucleophile. Cysteines 120 and 216 form a disulfide. Gly144 provides a ligand contact to ATP. Residues 166 to 168 (KDQ) form an interaction with tRNA region. Cys216 acts as the Cysteine persulfide intermediate in catalysis.

The protein belongs to the MnmA/TRMU family.

The protein resides in the cytoplasm. It carries out the reaction S-sulfanyl-L-cysteinyl-[protein] + uridine(34) in tRNA + AH2 + ATP = 2-thiouridine(34) in tRNA + L-cysteinyl-[protein] + A + AMP + diphosphate + H(+). Its function is as follows. Catalyzes the 2-thiolation of uridine at the wobble position (U34) of tRNA, leading to the formation of s(2)U34. The protein is tRNA-specific 2-thiouridylase MnmA of Wolbachia sp. subsp. Brugia malayi (strain TRS).